A 184-amino-acid chain; its full sequence is Large ribosomal subunit protein uL6 (184 aa).

Belongs to the universal ribosomal protein uL6 family. Part of the 50S ribosomal subunit.

Its function is as follows. This protein binds to the 23S rRNA, and is important in its secondary structure. It is located near the subunit interface in the base of the L7/L12 stalk, and near the tRNA binding site of the peptidyltransferase center. The sequence is that of Large ribosomal subunit protein uL6 from Thermosipho melanesiensis (strain DSM 12029 / CIP 104789 / BI429).